We begin with the raw amino-acid sequence, 859 residues long: Leucine--tRNA ligase (859 aa).

The 'HIGH' region signature appears at 42 to 52 (PYPSGRLHMGH). The 'KMSKS' region signature appears at 618–622 (KMSKS). Lys-621 lines the ATP pocket.

The protein belongs to the class-I aminoacyl-tRNA synthetase family.

Its subcellular location is the cytoplasm. The enzyme catalyses tRNA(Leu) + L-leucine + ATP = L-leucyl-tRNA(Leu) + AMP + diphosphate. This is Leucine--tRNA ligase from Shewanella sp. (strain ANA-3).